Consider the following 249-residue polypeptide: 5'-nucleotidase SurE (249 aa).

The a divalent metal cation site is built by aspartate 8, aspartate 9, serine 39, and asparagine 91.

Belongs to the SurE nucleotidase family. The cofactor is a divalent metal cation.

It localises to the cytoplasm. It carries out the reaction a ribonucleoside 5'-phosphate + H2O = a ribonucleoside + phosphate. Nucleotidase that shows phosphatase activity on nucleoside 5'-monophosphates. The chain is 5'-nucleotidase SurE from Pseudomonas syringae pv. tomato (strain ATCC BAA-871 / DC3000).